Reading from the N-terminus, the 319-residue chain is Dehydrogenase/reductase SDR family member 9 (319 aa).

Residues 1 to 20 (MLFWLLALLFLCAFLWNYKG) form the signal peptide. Residues 34-58 (ITGC…RVIA) and D83 each bind NAD(+). Residue S164 coordinates substrate. The Proton acceptor role is filled by Y176. K180 contributes to the NAD(+) binding site.

This sequence belongs to the short-chain dehydrogenases/reductases (SDR) family. Homotetramer.

It is found in the microsome membrane. The protein localises to the endoplasmic reticulum membrane. The enzyme catalyses 3beta-hydroxy-5alpha-pregnane-20-one + NAD(+) = 5alpha-pregnane-3,20-dione + NADH + H(+). The catalysed reaction is 17beta-hydroxy-5alpha-androstan-3-one + NAD(+) = 5alpha-androstan-3,17-dione + NADH + H(+). It carries out the reaction androsterone + NAD(+) = 5alpha-androstan-3,17-dione + NADH + H(+). It catalyses the reaction 5alpha-androstane-3alpha,17beta-diol + NAD(+) = 17beta-hydroxy-5alpha-androstan-3-one + NADH + H(+). The enzyme catalyses all-trans-retinol + NAD(+) = all-trans-retinal + NADH + H(+). The catalysed reaction is 3alpha-hydroxy-5alpha-pregnan-20-one + NAD(+) = 5alpha-pregnane-3,20-dione + NADH + H(+). Functionally, 3-alpha-hydroxysteroid dehydrogenase that converts 3-alpha-tetrahydroprogesterone (allopregnanolone) to dihydroxyprogesterone and 3-alpha-androstanediol to dihydroxyprogesterone. Also plays a role in the biosynthesis of retinoic acid. Can utilize both NADH and NADPH. This chain is Dehydrogenase/reductase SDR family member 9 (Dhrs9), found in Mus musculus (Mouse).